A 244-amino-acid chain; its full sequence is Osmotin-like protein OSM34 (244 aa).

Positions 1–22 (MANLLVSTFIFSALLLISTATA) are cleaved as a signal peptide. Disulfide bonds link cysteine 31–cysteine 222, cysteine 72–cysteine 82, cysteine 87–cysteine 93, cysteine 138–cysteine 212, cysteine 143–cysteine 195, cysteine 151–cysteine 161, cysteine 165–cysteine 174, and cysteine 175–cysteine 182.

Belongs to the thaumatin family.

This chain is Osmotin-like protein OSM34 (OSM34), found in Arabidopsis thaliana (Mouse-ear cress).